We begin with the raw amino-acid sequence, 172 residues long: Ribosome maturation factor RimP (172 aa).

This sequence belongs to the RimP family.

The protein resides in the cytoplasm. Required for maturation of 30S ribosomal subunits. The sequence is that of Ribosome maturation factor RimP from Chlorobium phaeovibrioides (strain DSM 265 / 1930) (Prosthecochloris vibrioformis (strain DSM 265)).